Here is a 405-residue protein sequence, read N- to C-terminus: Imidazolonepropionase (405 aa).

Positions 73 and 75 each coordinate Fe(3+). Zn(2+)-binding residues include histidine 73 and histidine 75. Arginine 82, tyrosine 145, and histidine 178 together coordinate 4-imidazolone-5-propanoate. Tyrosine 145 serves as a coordination point for N-formimidoyl-L-glutamate. Histidine 243 lines the Fe(3+) pocket. Histidine 243 serves as a coordination point for Zn(2+). Glutamine 246 is a 4-imidazolone-5-propanoate binding site. Aspartate 318 is a binding site for Fe(3+). Aspartate 318 serves as a coordination point for Zn(2+). 2 residues coordinate N-formimidoyl-L-glutamate: asparagine 320 and glycine 322. Residue threonine 323 participates in 4-imidazolone-5-propanoate binding.

This sequence belongs to the metallo-dependent hydrolases superfamily. HutI family. The cofactor is Zn(2+). Fe(3+) is required as a cofactor.

It localises to the cytoplasm. The enzyme catalyses 4-imidazolone-5-propanoate + H2O = N-formimidoyl-L-glutamate. The protein operates within amino-acid degradation; L-histidine degradation into L-glutamate; N-formimidoyl-L-glutamate from L-histidine: step 3/3. In terms of biological role, catalyzes the hydrolytic cleavage of the carbon-nitrogen bond in imidazolone-5-propanoate to yield N-formimidoyl-L-glutamate. It is the third step in the universal histidine degradation pathway. In Brucella suis (strain ATCC 23445 / NCTC 10510), this protein is Imidazolonepropionase.